The following is a 316-amino-acid chain: 4-hydroxy-3-methylbut-2-enyl diphosphate reductase (316 aa).

Cysteine 12 serves as a coordination point for [4Fe-4S] cluster. Positions 43 and 81 each coordinate (2E)-4-hydroxy-3-methylbut-2-enyl diphosphate. Dimethylallyl diphosphate-binding residues include histidine 43 and histidine 81. Isopentenyl diphosphate-binding residues include histidine 43 and histidine 81. Cysteine 103 contacts [4Fe-4S] cluster. Histidine 131 provides a ligand contact to (2E)-4-hydroxy-3-methylbut-2-enyl diphosphate. Position 131 (histidine 131) interacts with dimethylallyl diphosphate. Histidine 131 is a binding site for isopentenyl diphosphate. The active-site Proton donor is the glutamate 133. Residue threonine 170 coordinates (2E)-4-hydroxy-3-methylbut-2-enyl diphosphate. Cysteine 198 lines the [4Fe-4S] cluster pocket. (2E)-4-hydroxy-3-methylbut-2-enyl diphosphate contacts are provided by serine 226, asparagine 228, and serine 271. 3 residues coordinate dimethylallyl diphosphate: serine 226, asparagine 228, and serine 271. Positions 226, 228, and 271 each coordinate isopentenyl diphosphate.

It belongs to the IspH family. It depends on [4Fe-4S] cluster as a cofactor.

The catalysed reaction is isopentenyl diphosphate + 2 oxidized [2Fe-2S]-[ferredoxin] + H2O = (2E)-4-hydroxy-3-methylbut-2-enyl diphosphate + 2 reduced [2Fe-2S]-[ferredoxin] + 2 H(+). The enzyme catalyses dimethylallyl diphosphate + 2 oxidized [2Fe-2S]-[ferredoxin] + H2O = (2E)-4-hydroxy-3-methylbut-2-enyl diphosphate + 2 reduced [2Fe-2S]-[ferredoxin] + 2 H(+). The protein operates within isoprenoid biosynthesis; dimethylallyl diphosphate biosynthesis; dimethylallyl diphosphate from (2E)-4-hydroxy-3-methylbutenyl diphosphate: step 1/1. It participates in isoprenoid biosynthesis; isopentenyl diphosphate biosynthesis via DXP pathway; isopentenyl diphosphate from 1-deoxy-D-xylulose 5-phosphate: step 6/6. In terms of biological role, catalyzes the conversion of 1-hydroxy-2-methyl-2-(E)-butenyl 4-diphosphate (HMBPP) into a mixture of isopentenyl diphosphate (IPP) and dimethylallyl diphosphate (DMAPP). Acts in the terminal step of the DOXP/MEP pathway for isoprenoid precursor biosynthesis. The polypeptide is 4-hydroxy-3-methylbut-2-enyl diphosphate reductase (Bacillus cereus (strain AH820)).